The sequence spans 1072 residues: Neurofilament heavy polypeptide (1072 aa).

Residue Ser-74 is modified to Phosphoserine. In terms of domain architecture, IF rod spans Glu-94–Ile-409. Coiled-coil stretches lie at residues Leu-98–Gln-132, Ile-174–Glu-222, and Leu-293–Glu-380. A 55 X 6 AA approximate tandem repeats of K-S-P-[VAGSE]-[KEVTSGA]-[EAVK] region spans residues Thr-278–Pro-643. A phosphoserine mark is found at Ser-343, Ser-414, and Ser-417. The disordered stretch occupies residues Glu-454–Lys-1072. Acidic residues predominate over residues Glu-455–Glu-487. Low complexity predominate over residues Glu-488 to Ala-499. Ser-501 is modified (phosphoserine). The segment covering Ser-501–Ala-584 has biased composition (basic and acidic residues). 36 repeat units span residues Lys-507 to Glu-512, Lys-515 to Ala-520, Lys-521 to Ala-526, Lys-527 to Ala-532, Lys-533 to Val-538, Lys-539 to Val-544, Lys-545 to Ala-550, Lys-551 to Ala-556, Lys-557 to Val-562, Lys-563 to Val-568, Lys-569 to Ala-574, Lys-575 to Ala-580, Lys-581 to Val-586, Lys-587 to Val-592, Lys-593 to Ala-598, Lys-599 to Ala-604, Lys-605 to Val-610, Lys-611 to Ala-616, Lys-617 to Ala-622, Lys-623 to Val-628, Lys-629 to Ala-634, Lys-635 to Ala-640, Lys-641 to Val-646, Lys-647 to Val-652, Lys-653 to Ala-658, Lys-659 to Val-664, Lys-665 to Val-670, Lys-671 to Ala-676, Lys-677 to Val-682, Lys-683 to Val-688, Lys-689 to Ala-694, Lys-695 to Ala-700, Lys-701 to Ala-706, Lys-707 to Ala-712, Lys-713 to Ala-718, and Lys-719 to Ala-724. Phosphoserine is present on residues Ser-516, Ser-522, Ser-528, Ser-534, Ser-540, Ser-546, Ser-552, Ser-558, Ser-564, Ser-570, Ser-576, Ser-582, Ser-588, Ser-594, Ser-600, Ser-606, Ser-612, Ser-618, Ser-624, Ser-627, Ser-630, Ser-636, Ser-642, Ser-648, Ser-654, Ser-660, Ser-666, Ser-672, Ser-678, Ser-684, Ser-687, Ser-690, Ser-696, Ser-702, Ser-708, Ser-714, and Ser-720. Positions Ser-600–Ala-620 are enriched in basic and acidic residues. Residues Glu-621 to Pro-631 show a composition bias toward low complexity. Positions Ser-720 to Ala-774 are enriched in basic and acidic residues. A 37; approximate repeat occupies Lys-725–Ala-730. 7 consecutive repeat copies span residues Lys-731–Ala-736, Lys-737–Ala-742, Lys-743–Ala-748, Lys-749–Ala-754, Lys-755–Val-760, Lys-761–Ala-766, and Lys-767–Glu-772. Phosphoserine occurs at positions 732, 738, 744, 750, 756, and 762. The 45; approximate repeat unit spans residues Lys-775–Ala-780. A phosphoserine mark is found at Ser-776, Ser-782, and Ser-788. 2 tandem repeats follow at residues Lys-781 to Ala-786 and Lys-787 to Glu-792. 2 stretches are compositionally biased toward basic and acidic residues: residues Lys-781 to Ala-953 and Gly-963 to Lys-1072. A 48; approximate repeat occupies Lys-795 to Val-800. Tandem repeats lie at residues Lys-801–Ala-806, Lys-807–Glu-812, Lys-815–Ala-820, and Lys-826–Lys-831. 4 positions are modified to phosphoserine: Ser-802, Ser-808, Ser-816, and Ser-827. Thr-832 is modified (phosphothreonine). Phosphoserine is present on residues Ser-846, Ser-852, Ser-860, Ser-880, and Ser-937. 3 tandem repeats follow at residues Lys-851 to Glu-856, Lys-859 to Glu-864, and Lys-879 to Glu-884.

Belongs to the intermediate filament family. As to quaternary structure, forms heterodimers with NEFL; which can further hetero-oligomerize (in vitro). Forms heterodimers with INA (in vitro). In terms of processing, there are a number of repeats of the tripeptide K-S-P, NFH is phosphorylated on a number of the serines in this motif. It is thought that phosphorylation of NFH results in the formation of interfilament cross bridges that are important in the maintenance of axonal caliber. Post-translationally, phosphorylation seems to play a major role in the functioning of the larger neurofilament polypeptides (NF-M and NF-H), the levels of phosphorylation being altered developmentally and coincidentally with a change in the neurofilament function. Phosphorylated in the head and rod regions by the PKC kinase PKN1, leading to the inhibition of polymerization. Expressed in the dorsal root ganglion neurons (at protein level). Expressed in cutaneous and muscular sensory neurons.

Its subcellular location is the cytoplasm. It is found in the cytoskeleton. It localises to the cell projection. The protein localises to the axon. Functionally, neurofilaments usually contain three intermediate filament proteins: NEFL, NEFM, and NEFH which are involved in the maintenance of neuronal caliber. NEFH has an important function in mature axons that is not subserved by the two smaller NEF proteins. May additionally cooperate with the neuronal intermediate filament proteins PRPH and INA to form neuronal filamentous networks. This is Neurofilament heavy polypeptide (Nefh) from Rattus norvegicus (Rat).